Here is a 469-residue protein sequence, read N- to C-terminus: Glutamine synthetase (469 aa).

Residues 13 to 97 (HEVKFVDLRF…IRCDILEPGT (85 aa)) enclose the GS beta-grasp domain. The GS catalytic domain occupies 105–469 (PRSIAKRAED…PVEFELYYSV (365 aa)). 2 residues coordinate Mg(2+): Glu-130 and Glu-132. Glu-208 is an ATP binding site. Residues Glu-213 and Glu-221 each contribute to the Mg(2+) site. L-glutamate-binding positions include 265–266 (NG) and Gly-266. Residue His-270 participates in Mg(2+) binding. ATP contacts are provided by residues 272-274 (HMS) and Ser-274. 3 residues coordinate L-glutamate: Arg-322, Glu-328, and Arg-340. ATP-binding residues include Arg-340, Arg-345, and Lys-353. Glu-358 contacts Mg(2+). Residue Arg-360 coordinates L-glutamate. Tyr-398 bears the O-AMP-tyrosine mark.

The protein belongs to the glutamine synthetase family. As to quaternary structure, oligomer of 12 subunits arranged in the form of two hexagons. Requires Mn(2+) as cofactor.

The protein localises to the cytoplasm. The catalysed reaction is L-glutamate + NH4(+) + ATP = L-glutamine + ADP + phosphate + H(+). When cellular nitrogen levels are high, the C-terminal adenylyl transferase (AT) of GlnE inhibits GlnA by covalent transfer of an adenylyl group from ATP to Tyr-398. Conversely, when nitrogen levels are low, the N-terminal adenylyl removase (AR) of GlnE activates GlnA by removing the adenylyl group by phosphorolysis. The fully adenylated enzyme complex is inactive. Catalyzes the ATP-dependent biosynthesis of glutamine from glutamate and ammonia. The sequence is that of Glutamine synthetase from Salmonella typhi.